We begin with the raw amino-acid sequence, 215 residues long: Rod-determining factor A (215 aa).

In terms of biological role, involved in cell-shape determination. Required for the formation of rods and wild-type-like motility. The polypeptide is Rod-determining factor A (Haloferax volcanii (strain ATCC 29605 / DSM 3757 / JCM 8879 / NBRC 14742 / NCIMB 2012 / VKM B-1768 / DS2) (Halobacterium volcanii)).